Here is a 276-residue protein sequence, read N- to C-terminus: Outer plastidial membrane protein porin (276 aa).

The protein belongs to the eukaryotic mitochondrial porin (TC 1.B.8.1) family.

Its subcellular location is the plastid outer membrane. Forms a channel through the cell membrane that allows diffusion of small hydrophilic molecules. The channel adopts an open conformation at low or zero membrane potential and a closed conformation at potentials above 30-40 mV. The open state has a weak anion selectivity whereas the closed state is cation-selective. In Pisum sativum (Garden pea), this protein is Outer plastidial membrane protein porin (POR1).